We begin with the raw amino-acid sequence, 179 residues long: Lebocin-3 (179 aa).

The first 16 residues, 1–16 (MYKFLVFSSVLVLFFA), serve as a signal peptide directing secretion. Residues 17 to 120 (QASCQRFIQP…QPIESHRNTR (104 aa)) constitute a propeptide that is removed on maturation. A glycan (O-linked (GalNAc...) threonine) is linked at threonine 135. Positions 153-179 (RRHASEDQEELRQYNEHFLIPRDIFQE) are excised as a propeptide.

This sequence belongs to the lebocin family. In terms of processing, O-glycosylation is important for the antibacterial activity of lebocin. As to expression, hemolymph. Produced in fat body.

The protein resides in the secreted. In terms of biological role, antibacterial peptide. This chain is Lebocin-3 (LEB3), found in Bombyx mori (Silk moth).